Reading from the N-terminus, the 102-residue chain is Large ribosomal subunit protein bL21 (102 aa).

The protein belongs to the bacterial ribosomal protein bL21 family. Part of the 50S ribosomal subunit. Contacts protein L20.

This protein binds to 23S rRNA in the presence of protein L20. This is Large ribosomal subunit protein bL21 from Exiguobacterium sibiricum (strain DSM 17290 / CCUG 55495 / CIP 109462 / JCM 13490 / 255-15).